The following is a 122-amino-acid chain: Large ribosomal subunit protein uL14 (122 aa).

The protein belongs to the universal ribosomal protein uL14 family. As to quaternary structure, part of the 50S ribosomal subunit. Forms a cluster with proteins L3 and L19. In the 70S ribosome, L14 and L19 interact and together make contacts with the 16S rRNA in bridges B5 and B8.

Functionally, binds to 23S rRNA. Forms part of two intersubunit bridges in the 70S ribosome. The chain is Large ribosomal subunit protein uL14 from Allorhizobium ampelinum (strain ATCC BAA-846 / DSM 112012 / S4) (Agrobacterium vitis (strain S4)).